Reading from the N-terminus, the 415-residue chain is Diaminopimelate decarboxylase (415 aa).

Residue lysine 60 is modified to N6-(pyridoxal phosphate)lysine. Residues glycine 239 and 273–276 (EPGR) contribute to the pyridoxal 5'-phosphate site. Substrate-binding residues include arginine 276, arginine 312, and tyrosine 316. Cysteine 342 functions as the Proton donor in the catalytic mechanism. Glutamate 343 and tyrosine 370 together coordinate substrate. Pyridoxal 5'-phosphate is bound at residue tyrosine 370.

It belongs to the Orn/Lys/Arg decarboxylase class-II family. LysA subfamily. Homodimer. Requires pyridoxal 5'-phosphate as cofactor.

The catalysed reaction is meso-2,6-diaminopimelate + H(+) = L-lysine + CO2. It participates in amino-acid biosynthesis; L-lysine biosynthesis via DAP pathway; L-lysine from DL-2,6-diaminopimelate: step 1/1. Its function is as follows. Specifically catalyzes the decarboxylation of meso-diaminopimelate (meso-DAP) to L-lysine. The sequence is that of Diaminopimelate decarboxylase from Pseudomonas aeruginosa (strain ATCC 15692 / DSM 22644 / CIP 104116 / JCM 14847 / LMG 12228 / 1C / PRS 101 / PAO1).